The primary structure comprises 569 residues: Peroxynitrite isomerase THAP4 (569 aa).

The THAP-type zinc finger occupies 1–85 (MVICCAAVNC…LKPTAVPSIF (85 aa)). Residues 88–216 (SEKKRGAGGH…DKSGISMDDF (129 aa)) form a disordered region. 2 stretches are compositionally biased toward polar residues: residues 121-130 (IGSSLSSSDN) and 157-167 (AVSQEQGQSLE). Ser-159 is modified (phosphoserine). The short motif at 230 to 233 (LHSY) is the HCFC1-binding motif (HBM) element. Position 234 is a phosphoserine (Ser-234). Residues 235–312 (FSSKHTRERP…EAVQSEHSDA (78 aa)) are disordered. Residues 242–262 (ERPSVPREPMDRKRLKREMEP) are compositionally biased toward basic and acidic residues. Polar residues predominate over residues 265–279 (SGNSVAQSPPSSSLT). A compositionally biased stretch (low complexity) spans 280–289 (ATPQKASQSP). The tract at residues 407-569 (PPKLNPVVEP…LHITYKKVTP (163 aa)) is nitrobindin. Heme b contacts are provided by Thr-436 and His-559.

The protein in the C-terminal section; belongs to the nitrobindin family. Homodimer. It depends on heme b as a cofactor.

It is found in the cytoplasm. The protein resides in the nucleus. It carries out the reaction peroxynitrite = nitrate. It functions in the pathway nitrogen metabolism. Its function is as follows. Heme-binding protein able to scavenge peroxynitrite and to protect free L-tyrosine against peroxynitrite-mediated nitration, by acting as a peroxynitrite isomerase that converts peroxynitrite to nitrate. Therefore, this protein likely plays a role in peroxynitrite sensing and in the detoxification of reactive nitrogen and oxygen species (RNS and ROS, respectively). Is able to bind nitric oxide (NO) in vitro, but may act as a sensor of peroxynitrite levels in vivo, possibly modulating the transcriptional activity residing in the N-terminal region. This is Peroxynitrite isomerase THAP4 from Mus musculus (Mouse).